The chain runs to 205 residues: MKIEKPIFVVFEGIDGSGKSTLCKSLTEKLTERGIPSVNFTEPTNFETGKYLRKFLRGEIDLERKEQIDAFLNDREESLRQNILPSLESGKNVLLDRYMYSTAAYQSGDDLLPETIIEKNLKKNFKIPDLLFYLDLNPAIALERLSQRKENKERFETLAQLEKIRSAYNRILPKETIRIDGVKGPDEIVQECLEIFLRNFNRKFL.

13-20 contributes to the ATP binding site; it reads GIDGSGKS.

It belongs to the thymidylate kinase family.

It carries out the reaction dTMP + ATP = dTDP + ADP. Its function is as follows. Phosphorylation of dTMP to form dTDP in both de novo and salvage pathways of dTTP synthesis. The protein is Thymidylate kinase of Leptospira borgpetersenii serovar Hardjo-bovis (strain L550).